The following is a 162-amino-acid chain: Phosphopantetheine adenylyltransferase (162 aa).

Ser-11 is a substrate binding site. ATP contacts are provided by residues 11-12 (SF) and His-19. The substrate site is built by Lys-43, Leu-75, and Arg-89. Residues 90–92 (GLR), Glu-100, and 125–131 (FSYISSS) each bind ATP.

It belongs to the bacterial CoaD family. As to quaternary structure, homohexamer. It depends on Mg(2+) as a cofactor.

It localises to the cytoplasm. It carries out the reaction (R)-4'-phosphopantetheine + ATP + H(+) = 3'-dephospho-CoA + diphosphate. It participates in cofactor biosynthesis; coenzyme A biosynthesis; CoA from (R)-pantothenate: step 4/5. In terms of biological role, reversibly transfers an adenylyl group from ATP to 4'-phosphopantetheine, yielding dephospho-CoA (dPCoA) and pyrophosphate. This chain is Phosphopantetheine adenylyltransferase, found in Petrotoga mobilis (strain DSM 10674 / SJ95).